The sequence spans 874 residues: Bifunctional uridylyltransferase/uridylyl-removing enzyme (874 aa).

Positions Met1 to Ile332 are uridylyltransferase. A uridylyl-removing region spans residues Leu333–Thr692. One can recognise an HD domain in the interval Val451–Leu573. 2 ACT domains span residues Glu693–Asn777 and Leu800–Ala874.

The protein belongs to the GlnD family. Requires Mg(2+) as cofactor.

It carries out the reaction [protein-PII]-L-tyrosine + UTP = [protein-PII]-uridylyl-L-tyrosine + diphosphate. It catalyses the reaction [protein-PII]-uridylyl-L-tyrosine + H2O = [protein-PII]-L-tyrosine + UMP + H(+). With respect to regulation, uridylyltransferase (UTase) activity is inhibited by glutamine, while glutamine activates uridylyl-removing (UR) activity. Modifies, by uridylylation and deuridylylation, the PII regulatory proteins (GlnB and homologs), in response to the nitrogen status of the cell that GlnD senses through the glutamine level. Under low glutamine levels, catalyzes the conversion of the PII proteins and UTP to PII-UMP and PPi, while under higher glutamine levels, GlnD hydrolyzes PII-UMP to PII and UMP (deuridylylation). Thus, controls uridylylation state and activity of the PII proteins, and plays an important role in the regulation of nitrogen assimilation and metabolism. The sequence is that of Bifunctional uridylyltransferase/uridylyl-removing enzyme from Vibrio parahaemolyticus serotype O3:K6 (strain RIMD 2210633).